A 334-amino-acid chain; its full sequence is Putative violet-sensitive opsin (334 aa).

At 1–29 the chain is on the extracellular side; the sequence is MGKYFYLYENISKVGPYDGPQYYLAPTWA. An N-linked (GlcNAc...) asparagine glycan is attached at asparagine 10. A helical membrane pass occupies residues 30 to 54; the sequence is FYLQAAFMGFVFFVGTPLNFVVLLA. Over 55–66 the chain is Cytoplasmic; that stretch reads TAKYKKLRVPLN. Residues 67 to 88 traverse the membrane as a helical segment; sequence YILVNITFAGFIFVTFSVSQVF. Residues 89–106 are Extracellular-facing; it reads LASVRGYYFFGQTLCALE. A disulfide bond links cysteine 103 and cysteine 179. Residues 107-126 traverse the membrane as a helical segment; that stretch reads AAVGAVAGLVTSWSLAVLSF. Topologically, residues 127 to 145 are cytoplasmic; it reads ERYLVICKPFGAFKFGSNH. A helical transmembrane segment spans residues 146-168; it reads ALAAVIFTWFMGVVRCPPFFGWS. Residues 169–194 are Extracellular-facing; sequence RYIPEGLGCSCGPDWYTNCEEFSCAS. Residues 195 to 222 traverse the membrane as a helical segment; it reads YSKFLLVTCFICPITIIIFSYSQLLGAL. Topologically, residues 223 to 244 are cytoplasmic; the sequence is RAVAAQQAESASTQKAEKEVSR. Residues 245-272 traverse the membrane as a helical segment; it reads MIIVMVASFVTCYGPYALTAQYYAYSQD. Residues 273 to 279 lie on the Extracellular side of the membrane; sequence ENKDYRL. A helical transmembrane segment spans residues 280-301; the sequence is VTIPAFFSKSSCVYNPLIYAFM. Lysine 288 carries the N6-(retinylidene)lysine modification. The Cytoplasmic portion of the chain corresponds to 302-334; that stretch reads NKQFNGCIMEMVFGKKMEEASEVSSKTEVSTDS.

It belongs to the G-protein coupled receptor 1 family. Opsin subfamily. Post-translationally, phosphorylated on some or all of the serine and threonine residues present in the C-terminal region. In terms of tissue distribution, the three color pigments are found in the cone photoreceptor cells.

Its subcellular location is the membrane. In terms of biological role, visual pigments are the light-absorbing molecules that mediate vision. They consist of an apoprotein, opsin, covalently linked to cis-retinal. In Oryzias latipes (Japanese rice fish), this protein is Putative violet-sensitive opsin.